Reading from the N-terminus, the 129-residue chain is Histone H3 (129 aa).

The segment at 1 to 36 (MSRTKETARAKRTITSKKSKKAPSGASGVKRSHRRW) is disordered. Basic residues predominate over residues 10–21 (AKRTITSKKSKK).

This sequence belongs to the histone H3 family. The nucleosome is a histone octamer containing two molecules each of H2A, H2B, H3 and H4 assembled in one H3-H4 heterotetramer and two H2A-H2B heterodimers. The octamer wraps approximately 147 bp of DNA.

Its subcellular location is the nucleus. The protein resides in the chromosome. Its function is as follows. Core component of nucleosome. Nucleosomes wrap and compact DNA into chromatin, limiting DNA accessibility to the cellular machineries which require DNA as a template. Histones thereby play a central role in transcription regulation, DNA repair, DNA replication and chromosomal stability. DNA accessibility is regulated via a complex set of post-translational modifications of histones, also called histone code, and nucleosome remodeling. The protein is Histone H3 of Leishmania infantum.